Reading from the N-terminus, the 534-residue chain is MAAGSGSAAAVAAVAGGGPAGPHAAGVTAGAVTTGSGAPVPGPGAVLIGDRLYSGVLITLENCLLPEHTLRFTPSMSSGLDPDTETELRVTGCELIQAAGILLRLPQVAMATGQVLFQRFFYTKSFVKHSMEHVSMACVHLASKIEEAPRRIRDVINVFHRLRHLREKKKPVPLILDQEYVNLKNQIIKAERRVLKELGFCVHVKHPHKIIVMYLQVLECERNQHLVQTSWNYMNDSLRTDVFVRFQPESIACACIYLAARTLEIPLPNRPHWFLLFGTTEEEIQEICLKILQLYTRKKVDLSDLESKIEKKKLAIEEAKAQAKGLLPEGAPVLDNTSGFSPLPKNESPKEVKGNKPSPLPVQAMKNAKRKAEGAKRTGSNSPVNGVQKGRESRSRSGSRDQSYSRSPSRSASPKHRKSESYSTSSGSKSHSRSRSRSGSPPRQFNHSSTYKSSKMRSYKKSKDYKYSAHKARKSRSRSSSRSRSRSRERSDHSGKYKKKSHYYRNHRHERSRSYERASHRYDRDHPGHSRHRR.

Cyclin-like stretches follow at residues 94-196 (ELIQ…RVLK) and 209-293 (KIIV…KILQ). Residues 327-534 (LPEGAPVLDN…DHPGHSRHRR (208 aa)) form a disordered region. Residues 389–399 (KGRESRSRSGS) show a composition bias toward basic and acidic residues. Composition is skewed to low complexity over residues 400–412 (RDQS…SRSA) and 437–453 (RSGS…TYKS). The segment at 400–436 (RDQSYSRSPSRSASPKHRKSESYSTSSGSKSHSRSRS) is RS. The span at 468–485 (SAHKARKSRSRSSSRSRS) shows a compositional bias: basic residues. Residues 486 to 495 (RSRERSDHSG) show a composition bias toward basic and acidic residues. The span at 496–511 (KYKKKSHYYRNHRHER) shows a compositional bias: basic residues. Residues 512 to 528 (SRSYERASHRYDRDHPG) show a composition bias toward basic and acidic residues.

Belongs to the cyclin family. Cyclin L subfamily.

Its subcellular location is the nucleus speckle. It localises to the nucleus. It is found in the nucleoplasm. In terms of biological role, involved in pre-mRNA splicing. The sequence is that of Cyclin-L1 (CCNL1) from Gallus gallus (Chicken).